A 410-amino-acid polypeptide reads, in one-letter code: MIQKPRGTRDFLPDEMEARRSIEAKMREAVRRFGYREVCTPEFEELELFTLRSGEGIMQEMYVFEDKGGRKLALRPEITAAVIRMYINEAKVAPKPLRWCYFADCFRYERPQKGRYRQFWQFGAELIGADTALADAEVIMLAAEALNATGVTWELKVGHLAFMKNLLADLDPAAQRRVMAHLDKKDFEGLAETLAGMRKSGLNDSLTALVECRTLAEAFEIAGTIPEKERVEQTMGILDASGVRYSLNFGIARGLDYYTGMVFEGFAENLGAENQILGGGAYRLAHLFGGDDVASCGFAIGFDRVMVSLGEVFAAKDTIAGIVCTDEGRSFALSVAREFRAAGIRAEMDLMGRGLGAQLAHASKTADFAVVIGKREADAGQVTLKNLHSGEQKTLDPAAAIAEVKAHGAR.

Belongs to the class-II aminoacyl-tRNA synthetase family.

It is found in the cytoplasm. The enzyme catalyses tRNA(His) + L-histidine + ATP = L-histidyl-tRNA(His) + AMP + diphosphate + H(+). This Methanoregula boonei (strain DSM 21154 / JCM 14090 / 6A8) protein is Histidine--tRNA ligase.